Consider the following 257-residue polypeptide: Imidazole glycerol phosphate synthase subunit HisF (257 aa).

Catalysis depends on residues aspartate 11 and aspartate 130.

Belongs to the HisA/HisF family. In terms of assembly, heterodimer of HisH and HisF.

The protein resides in the cytoplasm. It carries out the reaction 5-[(5-phospho-1-deoxy-D-ribulos-1-ylimino)methylamino]-1-(5-phospho-beta-D-ribosyl)imidazole-4-carboxamide + L-glutamine = D-erythro-1-(imidazol-4-yl)glycerol 3-phosphate + 5-amino-1-(5-phospho-beta-D-ribosyl)imidazole-4-carboxamide + L-glutamate + H(+). It participates in amino-acid biosynthesis; L-histidine biosynthesis; L-histidine from 5-phospho-alpha-D-ribose 1-diphosphate: step 5/9. Its function is as follows. IGPS catalyzes the conversion of PRFAR and glutamine to IGP, AICAR and glutamate. The HisF subunit catalyzes the cyclization activity that produces IGP and AICAR from PRFAR using the ammonia provided by the HisH subunit. In Shewanella denitrificans (strain OS217 / ATCC BAA-1090 / DSM 15013), this protein is Imidazole glycerol phosphate synthase subunit HisF.